The following is a 343-amino-acid chain: MEEELRNLIKVWISALISISYCYYISSKISKGVLRLLSLLPIFIIFLLLPLFFSSVHFCVISGFFFTWLANFKLFLFAFDQEPLSPLPSNLTRFFCFACFPIKINKNPSSNRIHNKPMSKWVLAFKLLIFSFLLHVYRNNYDSGLSRFAFLALFTIHVYLEAELILVFVGALMSMLLGCEMEPVFNDPYLATSLQEFWSRRWNLMVPAVLRPAVHIPVQRFCAPLLGLHRAFYAGMLATFIVSGLMHELIYFYVIRKSPTWEVTCFFLLHGVVTCLEIAMKRMRWLPTPRRAVSGLAITVFLLVTAGWLFYPQMLRNDVHKRVISECLLVIDVVKRHVVCILM.

8 helical membrane passes run 7–27 (NLIK…YISS), 36–56 (LLSL…FSSV), 58–78 (FCVI…FLFA), 117–137 (PMSK…LHVY), 148–168 (FAFL…ILVF), 235–255 (GMLA…FYVI), 260–280 (TWEV…EIAM), and 292–312 (AVSG…LFYP).

It belongs to the wax synthase family.

It is found in the membrane. It catalyses the reaction a long chain fatty alcohol + a fatty acyl-CoA = a wax ester + CoA. In terms of biological role, catalyzes the final step in the synthesis of long-chain linear esters (waxes). This Arabidopsis thaliana (Mouse-ear cress) protein is Probable long-chain-alcohol O-fatty-acyltransferase 2 (AT2).